Here is a 388-residue protein sequence, read N- to C-terminus: AdoMet-dependent heme synthase (388 aa).

The segment covering 1 to 12 has biased composition (low complexity); it reads MHNANHPHGNGH. Residues 1-29 form a disordered region; that stretch reads MHNANHPHGNGHPAEKKGMGAHSGAMNMP. The Radical SAM core domain occupies 34-257; sequence DGSPACRLIA…TSMHLKATCA (224 aa). Cys-50, Cys-54, and Cys-57 together coordinate [4Fe-4S] cluster.

Belongs to the radical SAM superfamily. It depends on [4Fe-4S] cluster as a cofactor.

It carries out the reaction Fe-coproporphyrin III + 2 S-adenosyl-L-methionine = heme b + 2 5'-deoxyadenosine + 2 L-methionine + 2 CO2. It functions in the pathway porphyrin-containing compound metabolism; protoheme biosynthesis. Its function is as follows. Involved in siroheme-dependent heme b biosynthesis. Catalyzes the conversion of Fe-coproporphyrin III into heme by the oxidative decarboxylation of two propionate side chains. The sequence is that of AdoMet-dependent heme synthase from Oleidesulfovibrio alaskensis (strain ATCC BAA-1058 / DSM 17464 / G20) (Desulfovibrio alaskensis).